Here is a 245-residue protein sequence, read N- to C-terminus: Ribonuclease 3 (245 aa).

Residues 17–146 (FTDKMKSLGL…FVGALYLDQG (130 aa)) form the RNase III domain. A Mg(2+)-binding site is contributed by E59. D63 is an active-site residue. Residues D132 and E135 each coordinate Mg(2+). The active site involves E135. Residues 172–241 (DFKTQFQEYV…AEQAYKLMKN (70 aa)) enclose the DRBM domain.

It belongs to the ribonuclease III family. Homodimer. Mg(2+) serves as cofactor.

It localises to the cytoplasm. It carries out the reaction Endonucleolytic cleavage to 5'-phosphomonoester.. Digests double-stranded RNA. Involved in the processing of primary rRNA transcript to yield the immediate precursors to the large and small rRNAs (23S and 16S). Processes some mRNAs, and tRNAs when they are encoded in the rRNA operon. Processes pre-crRNA and tracrRNA of type II CRISPR loci if present in the organism. In Staphylococcus epidermidis (strain ATCC 12228 / FDA PCI 1200), this protein is Ribonuclease 3.